We begin with the raw amino-acid sequence, 330 residues long: Protein TIFY 11f (330 aa).

Positions 61–97 (EAAAAAQLKIMYGGRMLVFDDFFPAGGAVVELVRAAA) constitute a Tify 1 domain. A Jas motif is present at residues 124-142 (PVVRKVSLQRFVEKRRRMR). Residues 126–133 (VRKVSLQR) carry the Nuclear localization signal motif. One can recognise a Tify 2 domain in the interval 228-264 (EAAAAAQLKIMYGGRMLVFDDFFPAGGAVVELVRAAA). Positions 267 to 330 (GRDDDGARAR…SGRTDDAAFY (64 aa)) are disordered.

It belongs to the TIFY/JAZ family. Ubiquitinated. Targeted for degradation by the SCF(COI1) E3 ubiquitin ligase-proteasome pathway during jasmonate signaling.

The protein resides in the nucleus. In terms of biological role, repressor of jasmonate responses. The sequence is that of Protein TIFY 11f from Oryza sativa subsp. japonica (Rice).